Here is a 504-residue protein sequence, read N- to C-terminus: Maturase K (504 aa).

Belongs to the intron maturase 2 family. MatK subfamily.

Its subcellular location is the plastid. The protein resides in the chloroplast. Usually encoded in the trnK tRNA gene intron. Probably assists in splicing its own and other chloroplast group II introns. This Prionotes cerinthoides (Climbing heath) protein is Maturase K.